Reading from the N-terminus, the 414-residue chain is MAEKLKLARSMSLFEEAKQLVPGGVAGIRRPYNFVPGEYPIFFDHGKGGRVVDVDGNEYIDFLCAYGPIIIGYREDEIDDAVINQIKNKGFCFSLTQEMQNTLVKKLRELIPCCEMAALVKTGSDATTIAIRVARGYTGKTKIARYGYHGWHDWCVEVKGGIPPKLYEDIYEFHYNDLDSLKAILEANKDDMAGIIITPIGHPNGAEVQMPKPGYLEAVRELANQYHCLLIFDEIRSGFRCSLGGAQKLFGVTPDLSTFGKAMANGYAIAALVGKEEYMQVLADKVFLSSTFFPNSDGIVAAIKTIEILERDRILDVVAAKGRKFGAEVEKVVEESGVPVNFTGAPWMPYITFKKDEAGLYKKLRTEYYTQLIRHNVFMQPYHHGYICYRHTDEDLAYTVEAIRESLAEVKKML.

Lys261 carries the N6-(pyridoxal phosphate)lysine modification.

It belongs to the class-III pyridoxal-phosphate-dependent aminotransferase family. As to quaternary structure, homodimer. Pyridoxal 5'-phosphate serves as cofactor.

It carries out the reaction (3S)-3-aminobutanoyl-CoA + 2-oxoglutarate = acetoacetyl-CoA + L-glutamate. Its pathway is amino-acid degradation; L-lysine degradation via acetate pathway. Functionally, 3-aminobutyryl-CoA aminotransferase that acts specifically on coenzyme A (CoA) esters and catalyzes the conversion of 3-aminobutyryl-CoA into acetoacetyl-CoA in an alternative pathway of lysine fermentation. The sequence is that of 3-aminobutyryl-CoA aminotransferase (kat) from Cloacimonas acidaminovorans (strain Evry).